The chain runs to 1088 residues: DNA damage-binding protein 1b (1088 aa).

It belongs to the DDB1 family. As to quaternary structure, interacts with DDA1. Binds to KTN80.2/DWA3. Interacts with HTD1.

The protein resides in the nucleus. Its pathway is protein modification; protein ubiquitination. Its function is as follows. Component of light signal transduction machinery. Involved in repression of photomorphogenesis in darkness. Plays a role in DNA repair by forming with DDB2 the UV-damaged DNA-binding protein complex (UV-DDB). The chain is DNA damage-binding protein 1b from Arabidopsis thaliana (Mouse-ear cress).